Reading from the N-terminus, the 1106-residue chain is Voltage-dependent calcium channel subunit alpha-2/delta-1 (1106 aa).

An N-terminal signal peptide occupies residues 1–26 (MAAGRPLAWTLTLWQAWLILIGPSSE). Residues 27–1076 (EPFPSAVTIK…VLEDYTDCGG (1050 aa)) lie on the Extracellular side of the membrane. An N-linked (GlcNAc...) asparagine glycan is attached at Asn-94. Ser-121 carries the phosphoserine modification. Residues Asn-138 and Asn-186 are each glycosylated (N-linked (GlcNAc...) asparagine). The region spanning 255 to 432 (DMLILVDVSG…INTQEYLDVL (178 aa)) is the VWFA domain. The a divalent metal cation site is built by Asp-261, Ser-263, and Ser-265. The short motif at 261–265 (DVSGS) is the MIDAS-like motif element. N-linked (GlcNAc...) asparagine glycosylation is found at Asn-326 and Asn-350. An intrachain disulfide couples Cys-406 to Cys-1062. The region spanning 448 to 539 (WTNVYLDALE…QPKPIGVGIP (92 aa)) is the Cache domain. N-linked (GlcNAc...) asparagine glycosylation is found at Asn-615, Asn-784, and Asn-891. A helical transmembrane segment spans residues 1077–1097 (VSGLNPSLWSIIGIQFVLLWL). The Cytoplasmic portion of the chain corresponds to 1098–1106 (VSGSRHCLL).

Belongs to the calcium channel subunit alpha-2/delta family. In terms of assembly, dimer formed of alpha-2-1 and delta-1 chains; disulfide-linked. Voltage-dependent calcium channels are multisubunit complexes, consisting of alpha-1 (CACNA1), alpha-2 (CACNA2D), beta (CACNB) and delta (CACNA2D) subunits in a 1:1:1:1 ratio. In terms of processing, proteolytically processed into subunits alpha-2-1 and delta-1 that are disulfide-linked. Skeletal muscle.

Its subcellular location is the membrane. The protein localises to the cell membrane. In terms of biological role, the alpha-2/delta subunit of voltage-dependent calcium channels regulates calcium current density and activation/inactivation kinetics of the calcium channel. Plays an important role in excitation-contraction coupling. In Oryctolagus cuniculus (Rabbit), this protein is Voltage-dependent calcium channel subunit alpha-2/delta-1 (CACNA2D1).